We begin with the raw amino-acid sequence, 316 residues long: L-lactate dehydrogenase 3 (316 aa).

Val-16, Asp-37, Arg-42, and Tyr-68 together coordinate NAD(+). Arg-91 is a binding site for substrate. Residues Ser-104, 121–123 (ASN), and Thr-146 each bind NAD(+). 123 to 126 (NPVD) provides a ligand contact to substrate. 151-154 (DSSR) lines the substrate pocket. Beta-D-fructose 1,6-bisphosphate is bound by residues Arg-156 and His-171. The Proton acceptor role is filled by His-178. Thr-233 contacts substrate.

The protein belongs to the LDH/MDH superfamily. LDH family. As to quaternary structure, homotetramer.

The protein resides in the cytoplasm. The enzyme catalyses (S)-lactate + NAD(+) = pyruvate + NADH + H(+). Its pathway is fermentation; pyruvate fermentation to lactate; (S)-lactate from pyruvate: step 1/1. Its activity is regulated as follows. Allosterically activated by fructose 1,6-bisphosphate (FBP). Functionally, catalyzes the conversion of lactate to pyruvate. This Bacillus cereus (strain ATCC 10987 / NRS 248) protein is L-lactate dehydrogenase 3.